The primary structure comprises 1041 residues: Importin-9 (1041 aa).

N-acetylalanine is present on Ala2. The region spanning 43-119 is the Importin N-terminal domain; the sequence is AEEQIKVLEV…RELLPNGLRE (77 aa). The disordered stretch occupies residues 936 to 967; the sequence is QATPAEWNQDDSNDMWEDQEEEEEEEEDGLAG. Residues 943–964 show a composition bias toward acidic residues; sequence NQDDSNDMWEDQEEEEEEEEDG.

It belongs to the importin beta family. In terms of assembly, interacts with histones H2A, H2B, H3 and H4. The binding is coupled to RanGTP cycles. Interacts with AKIRIN2; promoting association with pre-assembled proteasomes. Associates with pre-assembled proteasomes; interaction is indirect and mediated via interaction with AKIRIN2. Interacts with PPP2R1A and PPP2R1B.

Its subcellular location is the cytoplasm. It localises to the nucleus. Its function is as follows. Nuclear transport receptor that mediates nuclear import of proteins, such as histones, proteasome and actin. Serves as receptor for nuclear localization signals (NLS) in cargo substrates. Is thought to mediate docking of the importin/substrate complex to the nuclear pore complex (NPC) through binding to nucleoporin and the complex is subsequently translocated through the pore by an energy requiring, Ran-dependent mechanism. At the nucleoplasmic side of the NPC, Ran binds to the importin, the importin/substrate complex dissociates and importin is re-exported from the nucleus to the cytoplasm where GTP hydrolysis releases Ran. The directionality of nuclear import is thought to be conferred by an asymmetric distribution of the GTP- and GDP-bound forms of Ran between the cytoplasm and nucleus. Mediates the import of pre-assembled proteasomes into the nucleus; AKIRIN2 acts as a molecular bridge between IPO9 and the proteasome complex. Mediates the nuclear import of histones H2A, H2B, H4 and H4. In addition to nuclear import, also acts as a chaperone for histones by preventing inappropriate non-nucleosomal interactions. Mediates the nuclear import of actin. This chain is Importin-9, found in Mus musculus (Mouse).